The primary structure comprises 232 residues: 26S proteasome non-ATPase regulatory subunit 10 (232 aa).

6 ANK repeats span residues 45-75, 79-108, 112-141, 144-173, 177-206, and 210-232; these read DERTPLHWAAAKGQISVAQYLMDNCKCSPNT, GGWTPLTSATSAGHTHMVKLLLEFGADPNT, SKRTPLHYASSKGRSDIVDLLLTHGAKNRK, TGSAPIHRASSNGSVATVERLLKGEANINS, EGDTPLHIAAEYNHEDVVECLLKHGADTTI, and DSKTPIDMSSSQTIKYLIKEFKK.

In terms of biological role, acts as a chaperone during the assembly of the 26S proteasome, specifically of the 19S regulatory complex (RC). The chain is 26S proteasome non-ATPase regulatory subunit 10 (psmD10) from Dictyostelium discoideum (Social amoeba).